Consider the following 351-residue polypeptide: Putative aminodehydroquinate synthase (351 aa).

NAD(+) is bound by residues 65–68 (EPTK), 97–101 (GTTTD), 121–122 (TS), Lys134, Lys143, and 161–164 (YLTT). Residues Glu176, His225, and His241 each coordinate Zn(2+).

It belongs to the sugar phosphate cyclases superfamily. aDHQS family. It depends on NAD(+) as a cofactor. Co(2+) serves as cofactor. Requires Zn(2+) as cofactor.

In terms of biological role, may catalyze the conversion of 3,4-dideoxy-4-amino-D-arabino-heptulosonate 7-phosphate (aDAHP) to 5-deoxy-5-amino-3-dehydroquinate (aDHQ). Probably involved in the formation of 3-amino-5-hydroxybenzoic acid (AHBA), the precursor of rifamycin and related ansamycins. The chain is Putative aminodehydroquinate synthase from Amycolatopsis mediterranei (strain S699) (Nocardia mediterranei).